The following is a 644-amino-acid chain: Protein ecdysoneless homolog (644 aa).

Disordered stretches follow at residues Ala-430–Asp-449, Leu-496–Gly-537, Gln-567–Ser-589, and Gln-623–Asn-644. Residues Val-431 to Asn-447 show a composition bias toward basic and acidic residues. The transcription activation stretch occupies residues Val-439–Asn-644. The interval Ile-481–Gly-497 is involved in nuclear export. The acidic region required for transactivation activity stretch occupies residues Glu-502 to Glu-532. Residues Ser-503, Ser-505, and Ser-518 each carry the phosphoserine modification. Positions Ser-503–Asp-523 are enriched in acidic residues. Basic and acidic residues predominate over residues Phe-524–Ser-534. Positions Gln-567–Asn-577 are enriched in polar residues.

Belongs to the ECD family. Interacts with TP53, MDM2, TXNIP. Interacts (phosphorylated) with PIH1D1. Interacts with RUVBL1 mediating the PIH1D1-independent association with the R2TP complex. Interacts with RB1, RBL1 and RBL2; ECD competes with E2F1 for binding to hypophospshorylated RB1. Interacts with EP300. Interacts with DDX39A. In terms of processing, phosphorylated predominantly by CK2 on two serine-containing clusters; involved in cell cycle regulation activity. Highly expressed in muscle and heart. Over-expressed in pancreatic and breast cancers.

The protein localises to the cytoplasm. Its subcellular location is the nucleus. Its function is as follows. Regulator of p53/TP53 stability and function. Inhibits MDM2-mediated degradation of p53/TP53 possibly by cooperating in part with TXNIP. May be involved transcriptional regulation. In vitro has intrinsic transactivation activity enhanced by EP300. May be a transcriptional activator required for the expression of glycolytic genes. Involved in regulation of cell cycle progression. Proposed to disrupt Rb-E2F binding leading to transcriptional activation of E2F proteins. The cell cycle -regulating function may depend on its RUVBL1-mediated association with the R2TP complex. May play a role in regulation of pre-mRNA splicing. Participates together with DDX39A in mRNA nuclear export. In Homo sapiens (Human), this protein is Protein ecdysoneless homolog (ECD).